A 234-amino-acid chain; its full sequence is UPF0309 protein lmo0025 (234 aa).

An SIS domain is found at 31–205 (VADSIMNDGI…ELMLEKGYTP (175 aa)).

This sequence belongs to the UPF0309 family.

The polypeptide is UPF0309 protein lmo0025 (Listeria monocytogenes serovar 1/2a (strain ATCC BAA-679 / EGD-e)).